The sequence spans 461 residues: tRNA modification GTPase MnmE (461 aa).

R23, E88, and R127 together coordinate (6S)-5-formyl-5,6,7,8-tetrahydrofolate. Residues 223–382 (GLSTVIVGKP…IEDALAEMVY (160 aa)) enclose the TrmE-type G domain. N233 is a K(+) binding site. Residues 233–238 (NVGKSS), 252–258 (TDVPGTT), and 277–280 (DTAG) each bind GTP. S237 provides a ligand contact to Mg(2+). Positions 252, 254, and 257 each coordinate K(+). T258 contacts Mg(2+). K461 is a (6S)-5-formyl-5,6,7,8-tetrahydrofolate binding site.

This sequence belongs to the TRAFAC class TrmE-Era-EngA-EngB-Septin-like GTPase superfamily. TrmE GTPase family. Homodimer. Heterotetramer of two MnmE and two MnmG subunits. K(+) serves as cofactor.

The protein localises to the cytoplasm. In terms of biological role, exhibits a very high intrinsic GTPase hydrolysis rate. Involved in the addition of a carboxymethylaminomethyl (cmnm) group at the wobble position (U34) of certain tRNAs, forming tRNA-cmnm(5)s(2)U34. In Alkaliphilus oremlandii (strain OhILAs) (Clostridium oremlandii (strain OhILAs)), this protein is tRNA modification GTPase MnmE.